The primary structure comprises 430 residues: Anaerobic glycerol-3-phosphate dehydrogenase subunit B (430 aa).

This sequence belongs to the anaerobic G-3-P dehydrogenase subunit B family. As to quaternary structure, composed of a catalytic GlpA/B dimer and of membrane bound GlpC. It depends on FMN as a cofactor.

The catalysed reaction is a quinone + sn-glycerol 3-phosphate = dihydroxyacetone phosphate + a quinol. It participates in polyol metabolism; glycerol degradation via glycerol kinase pathway; glycerone phosphate from sn-glycerol 3-phosphate (anaerobic route): step 1/1. In terms of biological role, conversion of glycerol 3-phosphate to dihydroxyacetone. Uses fumarate or nitrate as electron acceptor. The sequence is that of Anaerobic glycerol-3-phosphate dehydrogenase subunit B from Actinobacillus succinogenes (strain ATCC 55618 / DSM 22257 / CCUG 43843 / 130Z).